Reading from the N-terminus, the 326-residue chain is 4-hydroxythreonine-4-phosphate dehydrogenase (326 aa).

Residue Thr132 coordinates substrate. A divalent metal cation-binding residues include His160, His205, and His260. Positions 268, 277, and 286 each coordinate substrate.

It belongs to the PdxA family. In terms of assembly, homodimer. The cofactor is Zn(2+). Mg(2+) serves as cofactor. Requires Co(2+) as cofactor.

It localises to the cytoplasm. The enzyme catalyses 4-(phosphooxy)-L-threonine + NAD(+) = 3-amino-2-oxopropyl phosphate + CO2 + NADH. It participates in cofactor biosynthesis; pyridoxine 5'-phosphate biosynthesis; pyridoxine 5'-phosphate from D-erythrose 4-phosphate: step 4/5. Its function is as follows. Catalyzes the NAD(P)-dependent oxidation of 4-(phosphooxy)-L-threonine (HTP) into 2-amino-3-oxo-4-(phosphooxy)butyric acid which spontaneously decarboxylates to form 3-amino-2-oxopropyl phosphate (AHAP). This chain is 4-hydroxythreonine-4-phosphate dehydrogenase, found in Stenotrophomonas maltophilia (strain R551-3).